The sequence spans 603 residues: NADH-ubiquinone oxidoreductase chain 5 (603 aa).

A run of 15 helical transmembrane segments spans residues 38-58 (SIVASTFIISLFPTTMFMCLD), 87-107 (MMFIPVALFVTWSIMEFSLWY), 122-142 (LIFLITMLILVTANNLFQLFI), 144-160 (WEGVGIMSFLLISWWYA), 171-191 (AILYNRIGDIGFILALAWFIL), 211-233 (TPLLGLLLAAAGKSAQLGLHPWL), 241-261 (TPVSALLHSSTMVVAGIFLLI), 272-292 (LIQTLTLCLGAITTLFAAVCA), 301-320 (IVAFSTSSQLGLMMVTIGIN), 325-347 (AFLHICTHAFFKAMLFMCSGSII), 370-390 (STSLTIGSLALAGMPFLTGFY), 407-429 (WALSITLIATSLTSAYSTRMILL), 458-478 (AAGSLFAGFLITNNISPASPF), 482-502 (IPLYLKLTALAVTFLGLLTAL), and 582-602 (GMIKLYFLSFFFPLILTLLLI).

This sequence belongs to the complex I subunit 5 family. Core subunit of respiratory chain NADH dehydrogenase (Complex I) which is composed of 45 different subunits.

It is found in the mitochondrion inner membrane. It catalyses the reaction a ubiquinone + NADH + 5 H(+)(in) = a ubiquinol + NAD(+) + 4 H(+)(out). Core subunit of the mitochondrial membrane respiratory chain NADH dehydrogenase (Complex I) which catalyzes electron transfer from NADH through the respiratory chain, using ubiquinone as an electron acceptor. Essential for the catalytic activity and assembly of complex I. The sequence is that of NADH-ubiquinone oxidoreductase chain 5 (MT-ND5) from Homo sapiens (Human).